Consider the following 191-residue polypeptide: Peptidyl-tRNA hydrolase (191 aa).

Residue Y17 coordinates tRNA. The active-site Proton acceptor is the H22. The tRNA site is built by Y68, N70, and N116.

It belongs to the PTH family. Monomer.

It is found in the cytoplasm. It catalyses the reaction an N-acyl-L-alpha-aminoacyl-tRNA + H2O = an N-acyl-L-amino acid + a tRNA + H(+). Its function is as follows. Hydrolyzes ribosome-free peptidyl-tRNAs (with 1 or more amino acids incorporated), which drop off the ribosome during protein synthesis, or as a result of ribosome stalling. In terms of biological role, catalyzes the release of premature peptidyl moieties from peptidyl-tRNA molecules trapped in stalled 50S ribosomal subunits, and thus maintains levels of free tRNAs and 50S ribosomes. In Francisella tularensis subsp. mediasiatica (strain FSC147), this protein is Peptidyl-tRNA hydrolase.